Here is a 282-residue protein sequence, read N- to C-terminus: Dihydroorotate dehydrogenase B (NAD(+)), electron transfer subunit homolog (282 aa).

Residues 2–100 (GGTALNEIVK…VGPLGNPSEI (99 aa)) enclose the FAD-binding FR-type domain. [2Fe-2S] cluster-binding residues include Cys-225, Cys-228, and Cys-240.

Belongs to the PyrK family. Requires [2Fe-2S] cluster as cofactor. FAD is required as a cofactor.

The sequence is that of Dihydroorotate dehydrogenase B (NAD(+)), electron transfer subunit homolog from Thermotoga maritima (strain ATCC 43589 / DSM 3109 / JCM 10099 / NBRC 100826 / MSB8).